A 153-amino-acid polypeptide reads, in one-letter code: MSIELDLQIACENEKDLPSEKDFMSWLNAVLPQFQPQAELTIRIVDEKESHELNHQYRGMDKPTNVLSFPFEAPPEVEIDLLGDLIICRQVVEKEAVEQNKPLLAHWAHMVVHGSLHLLGYDHIEDEEAEEMESLETELMQEMGFEDPYLAEK.

Histidine 113, histidine 117, and histidine 123 together coordinate Zn(2+).

This sequence belongs to the endoribonuclease YbeY family. It depends on Zn(2+) as a cofactor.

Its subcellular location is the cytoplasm. Functionally, single strand-specific metallo-endoribonuclease involved in late-stage 70S ribosome quality control and in maturation of the 3' terminus of the 16S rRNA. This Aliivibrio salmonicida (strain LFI1238) (Vibrio salmonicida (strain LFI1238)) protein is Endoribonuclease YbeY.